The following is a 421-amino-acid chain: Gamma-glutamyl phosphate reductase (421 aa).

Belongs to the gamma-glutamyl phosphate reductase family.

The protein localises to the cytoplasm. The catalysed reaction is L-glutamate 5-semialdehyde + phosphate + NADP(+) = L-glutamyl 5-phosphate + NADPH + H(+). It participates in amino-acid biosynthesis; L-proline biosynthesis; L-glutamate 5-semialdehyde from L-glutamate: step 2/2. Functionally, catalyzes the NADPH-dependent reduction of L-glutamate 5-phosphate into L-glutamate 5-semialdehyde and phosphate. The product spontaneously undergoes cyclization to form 1-pyrroline-5-carboxylate. The polypeptide is Gamma-glutamyl phosphate reductase (Pseudomonas fluorescens (strain SBW25)).